A 359-amino-acid polypeptide reads, in one-letter code: 3-dehydroquinate synthase (359 aa).

NAD(+)-binding positions include 69 to 74, 103 to 107, 127 to 128, Lys140, and Lys149; these read DAEDGK, GAVTD, and TT. 3 residues coordinate Zn(2+): Glu182, His244, and His260.

Belongs to the sugar phosphate cyclases superfamily. Dehydroquinate synthase family. NAD(+) serves as cofactor. Co(2+) is required as a cofactor. The cofactor is Zn(2+).

Its subcellular location is the cytoplasm. It carries out the reaction 7-phospho-2-dehydro-3-deoxy-D-arabino-heptonate = 3-dehydroquinate + phosphate. The protein operates within metabolic intermediate biosynthesis; chorismate biosynthesis; chorismate from D-erythrose 4-phosphate and phosphoenolpyruvate: step 2/7. Functionally, catalyzes the conversion of 3-deoxy-D-arabino-heptulosonate 7-phosphate (DAHP) to dehydroquinate (DHQ). This chain is 3-dehydroquinate synthase, found in Corynebacterium pseudotuberculosis (strain C231).